The following is a 519-amino-acid chain: Cytosol aminopeptidase (519 aa).

The residue at position 42 (Ser-42) is a Phosphoserine. An N6-succinyllysine modification is found at Lys-45. Ser-54 carries the post-translational modification Phosphoserine. Lys-61 and Lys-103 each carry N6-succinyllysine. Phosphoserine occurs at positions 180 and 194. The Zn(2+) site is built by Leu-202, Met-203, and Thr-205. Lys-221 carries the N6-acetyllysine; alternate modification. N6-succinyllysine; alternate is present on Lys-221. The residue at position 238 (Ser-238) is a Phosphoserine. The Zn(2+) site is built by Lys-282 and Asp-287. Lys-282, Asp-287, Ser-292, and Lys-294 together coordinate substrate. Asp-287 is a binding site for Mg(2+). The active site involves Lys-294. Zn(2+) contacts are provided by Arg-303, Asp-305, Asp-364, and Glu-366. 2 residues coordinate substrate: Asp-305 and Asp-364. The Mg(2+) site is built by Asp-364 and Glu-366. The active site involves Arg-368. An N6-acetyllysine; alternate modification is found at Lys-455. Lys-455 is modified (N6-succinyllysine; alternate). Lys-476 is modified (N6-succinyllysine). Lys-489 carries the post-translational modification N6-acetyllysine; alternate. Lys-489 carries the post-translational modification N6-succinyllysine; alternate.

The protein belongs to the peptidase M17 family. As to quaternary structure, homohexamer. The cofactor is Zn(2+). Mn(2+) serves as cofactor.

The protein resides in the cytoplasm. The catalysed reaction is Release of an N-terminal amino acid, Xaa-|-Yaa-, in which Xaa is preferably Leu, but may be other amino acids including Pro although not Arg or Lys, and Yaa may be Pro. Amino acid amides and methyl esters are also readily hydrolyzed, but rates on arylamides are exceedingly low.. It carries out the reaction an S-substituted L-cysteinylglycine + H2O = an S-substituted L-cysteine + glycine. The enzyme catalyses L-cysteinylglycine + H2O = L-cysteine + glycine. It catalyses the reaction S-benzyl-L-cysteinylglycine + H2O = S-benzyl-L-cysteine + glycine. The catalysed reaction is Release of N-terminal proline from a peptide.. Functionally, cytosolic metallopeptidase that catalyzes the removal of unsubstituted N-terminal hydrophobic amino acids from various peptides. The presence of Zn(2+) ions is essential for the peptidase activity, and the association with other cofactors can modulate the substrate spectificity of the enzyme. For instance, in the presence of Mn(2+), it displays a specific Cys-Gly hydrolyzing activity of Cys-Gly-S-conjugates. Involved in the metabolism of glutathione and in the degradation of glutathione S-conjugates, which may play a role in the control of the cell redox status. This chain is Cytosol aminopeptidase, found in Sus scrofa (Pig).